The primary structure comprises 93 residues: MKENYNYPLDLSWSTTEMTEVLSFFNQVEKFYESKVEKELFLESYAAFKKVVPSKMQEKQLGRDFEQSSGYSLYRALKEVEASGKRFVSADKA.

It belongs to the UPF0223 family.

The polypeptide is UPF0223 protein LACR_0546 (Lactococcus lactis subsp. cremoris (strain SK11)).